A 485-amino-acid polypeptide reads, in one-letter code: Adenosylhomocysteinase (485 aa).

The substrate site is built by T64, D139, and E205. Residue 206 to 208 (TTT) coordinates NAD(+). Substrate is bound by residues K235 and D239. Residues N240, 269 to 274 (GYGDVG), E292, N327, 348 to 350 (IGH), and N397 each bind NAD(+).

The protein belongs to the adenosylhomocysteinase family. Homotetramer. NAD(+) is required as a cofactor.

It catalyses the reaction S-adenosyl-L-homocysteine + H2O = L-homocysteine + adenosine. The protein operates within amino-acid biosynthesis; L-homocysteine biosynthesis; L-homocysteine from S-adenosyl-L-homocysteine: step 1/1. Its function is as follows. Adenosylhomocysteine is a competitive inhibitor of S-adenosyl-L-methionine-dependent methyl transferase reactions; therefore adenosylhomocysteinase may play a key role in the control of methylations via regulation of the intracellular concentration of adenosylhomocysteine. The protein is Adenosylhomocysteinase (SAHH) of Triticum aestivum (Wheat).